We begin with the raw amino-acid sequence, 540 residues long: L-aspartate oxidase (540 aa).

Residues 16–19, lysine 38, 45–52, and aspartate 223 contribute to the FAD site; these read SGAA and STFYAQGG. Arginine 290 functions as the Proton donor/acceptor in the catalytic mechanism. FAD contacts are provided by residues glutamate 375 and 391–392; that span reads SL.

Belongs to the FAD-dependent oxidoreductase 2 family. NadB subfamily. Requires FAD as cofactor.

The protein localises to the cytoplasm. It catalyses the reaction L-aspartate + O2 = iminosuccinate + H2O2. The catalysed reaction is fumarate + L-aspartate = iminosuccinate + succinate. It functions in the pathway cofactor biosynthesis; NAD(+) biosynthesis; iminoaspartate from L-aspartate (oxidase route): step 1/1. In terms of biological role, catalyzes the oxidation of L-aspartate to iminoaspartate, the first step in the de novo biosynthesis of NAD(+). Can use either oxygen or fumarate as electron acceptors, which allows the enzyme to be functional under aerobic and anaerobic conditions. The chain is L-aspartate oxidase (nadB) from Escherichia coli O157:H7.